The sequence spans 573 residues: Protein FAM200A (573 aa).

Positions 1 to 51 (MTPESRDTTDLSPRGTQEMEGIVVVKVEEEDEEDHFQKQRNKVESSPQVLS) are disordered. The Extracellular portion of the chain corresponds to 1–513 (MTPESRDTTD…DEFPLLSRKS (513 aa)). The helical transmembrane segment at 514 to 533 (ISLLLPFTTTYLCELGFSIL) threads the bilayer. At 534–573 (TRLKTKKRNRLNSAPDMRVALSSCVPDWKELMNRQAHPSH) the chain is on the cytoplasmic side.

Belongs to the FAM200 family.

The protein resides in the membrane. This is Protein FAM200A (FAM200A) from Macaca fascicularis (Crab-eating macaque).